Here is a 101-residue protein sequence, read N- to C-terminus: Acylphosphatase-1 (101 aa).

Serine 2 is subject to N-acetylserine. The residue at position 2 (serine 2) is an N-acetylalanine. An Acylphosphatase-like domain is found at 11-101; the sequence is SVDYEVFGKV…LDYSDFQIVK (91 aa). Residues arginine 26 and asparagine 44 contribute to the active site.

The protein belongs to the acylphosphatase family. As to expression, organ-common type isozyme is found in many different tissues.

It carries out the reaction an acyl phosphate + H2O = a carboxylate + phosphate + H(+). The protein is Acylphosphatase-1 (ACYP1) of Sus scrofa (Pig).